A 592-amino-acid chain; its full sequence is Bifunctional purine biosynthesis protein ADE17 (592 aa).

The 147-residue stretch at 1-147 (MANYTKTAIL…KNHARVTILS (147 aa)) folds into the MGS-like domain. IMP contacts are provided by residues 35–38 (SGGT), 65–68 (RVKT), 102–103 (CN), and 126–127 (DI). The active-site Proton donor/acceptor; for FAICAR cyclization activity is lysine 138. Residues 206–207 (RY), histidine 267, glycine 315, aspartate 338, asparagine 430, and arginine 450 contribute to the 5-amino-1-(5-phospho-beta-D-ribosyl)imidazole-4-carboxamide site. Residue histidine 267 is the Proton acceptor; for AICAR formyltransferase activity of the active site. Isoleucine 451 is a binding site for (6R)-10-formyltetrahydrofolate. Phenylalanine 541 is a 5-amino-1-(5-phospho-beta-D-ribosyl)imidazole-4-carboxamide binding site. (6R)-10-formyltetrahydrofolate-binding positions include aspartate 546 and 565-566 (SV). A 5-amino-1-(5-phospho-beta-D-ribosyl)imidazole-4-carboxamide-binding site is contributed by arginine 588.

It belongs to the PurH family. In terms of assembly, homodimer.

It localises to the cytoplasm. Its subcellular location is the cytosol. It carries out the reaction (6R)-10-formyltetrahydrofolate + 5-amino-1-(5-phospho-beta-D-ribosyl)imidazole-4-carboxamide = 5-formamido-1-(5-phospho-D-ribosyl)imidazole-4-carboxamide + (6S)-5,6,7,8-tetrahydrofolate. The catalysed reaction is IMP + H2O = 5-formamido-1-(5-phospho-D-ribosyl)imidazole-4-carboxamide. The protein operates within purine metabolism; IMP biosynthesis via de novo pathway; 5-formamido-1-(5-phospho-D-ribosyl)imidazole-4-carboxamide from 5-amino-1-(5-phospho-D-ribosyl)imidazole-4-carboxamide (10-formyl THF route): step 1/1. It functions in the pathway purine metabolism; IMP biosynthesis via de novo pathway; IMP from 5-formamido-1-(5-phospho-D-ribosyl)imidazole-4-carboxamide: step 1/1. Its function is as follows. Bifunctional enzyme that catalyzes the last two steps of purine biosynthesis. Acts as a transformylase that incorporates a formyl group to the AMP analog AICAR (5-amino-1-(5-phospho-beta-D-ribosyl)imidazole-4-carboxamide) to produce the intermediate formyl-AICAR (FAICAR). Also catalyzes the cyclization of FAICAR to IMP. This chain is Bifunctional purine biosynthesis protein ADE17, found in Saccharomyces cerevisiae (strain ATCC 204508 / S288c) (Baker's yeast).